The following is a 219-amino-acid chain: Large ribosomal subunit protein uL4 (219 aa).

Positions 43–101 are disordered; it reads AAARQGTHKTKRRGEVRGGGKKPYRQKGTGRARQGSTRAPQFAGGGVVHGPQPRDYSQR. Basic residues predominate over residues 61–72; it reads GGKKPYRQKGTG.

This sequence belongs to the universal ribosomal protein uL4 family. As to quaternary structure, part of the 50S ribosomal subunit.

One of the primary rRNA binding proteins, this protein initially binds near the 5'-end of the 23S rRNA. It is important during the early stages of 50S assembly. It makes multiple contacts with different domains of the 23S rRNA in the assembled 50S subunit and ribosome. In terms of biological role, forms part of the polypeptide exit tunnel. The protein is Large ribosomal subunit protein uL4 of Streptomyces coelicolor (strain ATCC BAA-471 / A3(2) / M145).